Reading from the N-terminus, the 645-residue chain is Cytoplasmic dynein 1 intermediate chain 1 (645 aa).

Basic and acidic residues-rich tracts occupy residues 1–13 (MSDKSDLKAELER) and 20–58 (QIREEKKRKEEERKKKEADMQQKKEPVQDDSDLDRKRRE). Disordered regions lie at residues 1–58 (MSDK…KRRE) and 96–125 (MSPSSKSVSTPSEAGSQDSGDLGPLTRTLQ). The residue at position 2 (S2) is an N-acetylserine. The interaction with DCTN1 stretch occupies residues 2–123 (SDKSDLKAEL…SGDLGPLTRT (122 aa)). 2 positions are modified to phosphoserine: S50 and S100. Over residues 96-107 (MSPSSKSVSTPS) the composition is skewed to low complexity. Phosphothreonine is present on T105. S107, S111, and S114 each carry phosphoserine. The interaction with DYNLT1 stretch occupies residues 147–163 (KLGVSKVTQVDFLPREV). Positions 169–221 (ETQTPLATHQSEEDEEDEEMVESKVGQDSELENQDKKQEVKEAPPRELTEEEK) are disordered. T176 is modified (phosphothreonine). 2 positions are modified to phosphoserine: S179 and S197. Positions 189-221 (VESKVGQDSELENQDKKQEVKEAPPRELTEEEK) are enriched in basic and acidic residues. WD repeat units follow at residues 285–334 (SKHR…TTPE), 338–378 (HCQS…RTPV), 387–428 (AHTH…TPQE), 437–477 (SKPV…AGIG), 482–527 (GHQG…PLYS), 530–570 (DNAD…EVPT), and 576–615 (EGASALNRVRWAQAGKEVAVGDSEGRIWVYDVGELAVPHN). S635 is subject to Phosphoserine.

It belongs to the dynein intermediate chain family. Homodimer. The cytoplasmic dynein 1 complex consists of two catalytic heavy chains (HCs) and a number of non-catalytic subunits presented by intermediate chains (ICs), light intermediate chains (LICs) and light chains (LCs); the composition seems to vary in respect to the IC, LIC and LC composition. The heavy chain homodimer serves as a scaffold for the probable homodimeric assembly of the respective non-catalytic subunits. The ICs and LICs bind directly to the HC dimer and the LCs assemble on the IC dimer. Interacts with DYNC1H1. Interacts with DYNLT1 and DYNLT3. Interacts with DCTN1. Interacts with MCRS1; the interaction is required for the proper distribution of centriolar satellites.

It is found in the cytoplasm. It localises to the chromosome. Its subcellular location is the centromere. The protein resides in the kinetochore. The protein localises to the cytoskeleton. It is found in the spindle pole. Its function is as follows. Acts as one of several non-catalytic accessory components of the cytoplasmic dynein 1 complex that are thought to be involved in linking dynein to cargos and to adapter proteins that regulate dynein function. Cytoplasmic dynein 1 acts as a motor for the intracellular retrograde motility of vesicles and organelles along microtubules. The intermediate chains mediate the binding of dynein to dynactin via its 150 kDa component (p150-glued) DCTN1. May play a role in mediating the interaction of cytoplasmic dynein with membranous organelles and kinetochores. The chain is Cytoplasmic dynein 1 intermediate chain 1 (DYNC1I1) from Homo sapiens (Human).